The primary structure comprises 406 residues: ATPase ASNA1 homolog (406 aa).

21 to 28 (KGGVGKTT) lines the ATP pocket. Residue Asp-62 is part of the active site. Positions 300 and 327 each coordinate ATP. Zn(2+) is bound by residues Cys-339 and Cys-342.

The protein belongs to the arsA ATPase family. Homodimer.

It localises to the cytoplasm. Its subcellular location is the endoplasmic reticulum. Functionally, ATPase required for the post-translational delivery of tail-anchored (TA) proteins to the endoplasmic reticulum. Recognizes and selectively binds the transmembrane domain of TA proteins in the cytosol. This complex then targets to the endoplasmic reticulum by membrane-bound receptors, where the tail-anchored protein is released for insertion. This process is regulated by ATP binding and hydrolysis. ATP binding drives the homodimer towards the closed dimer state, facilitating recognition of newly synthesized TA membrane proteins. ATP hydrolysis is required for insertion. Subsequently, the homodimer reverts towards the open dimer state, lowering its affinity for the membrane-bound receptor, and returning it to the cytosol to initiate a new round of targeting. This Leishmania braziliensis protein is ATPase ASNA1 homolog.